We begin with the raw amino-acid sequence, 141 residues long: Protein KRTCAP2 homolog (141 aa).

Helical transmembrane passes span 11 to 31 (VVSS…LRFC), 42 to 62 (VLLG…CVSN), 74 to 94 (AKLL…AGLV), and 97 to 117 (VCAT…NRIS).

Belongs to the KRTCAP2 family. As to quaternary structure, component of the oligosaccharyltransferase (OST) complex.

It localises to the membrane. Its function is as follows. Subunit of the oligosaccharyl transferase (OST) complex that catalyzes the initial transfer of a defined glycan (Glc(3)Man(9)GlcNAc(2) in eukaryotes) from the lipid carrier dolichol-pyrophosphate to an asparagine residue within an Asn-X-Ser/Thr consensus motif in nascent polypeptide chains, the first step in protein N-glycosylation. N-glycosylation occurs cotranslationally and the complex associates with the Sec61 complex at the channel-forming translocon complex that mediates protein translocation across the endoplasmic reticulum (ER). All subunits are required for a maximal enzyme activity. The protein is Protein KRTCAP2 homolog of Drosophila melanogaster (Fruit fly).